We begin with the raw amino-acid sequence, 232 residues long: MSNVDHAEIAKFEALAHRWWDRESEFKPLHDINPLRVNWIDERAGLAGKKVLDIGCGGGILSEAMAQRGASVTGIDMGEAPLAVARLHQLESGVAVDYRQITAEQMAEEMPGQFDVVTCLEMLEHVPDPASVIRACHRLVKPGGQVFLSTINRNPKAYLFAVIGAEYILQLLPRGTHDFRKFIRPSELGAWSREAGLEVKDIIGLTYNPLTKHYKLANDVDVNYMVQTKREA.

The S-adenosyl-L-methionine site is built by R36, G55, D76, and L120.

This sequence belongs to the methyltransferase superfamily. UbiG/COQ3 family.

The catalysed reaction is a 3-demethylubiquinol + S-adenosyl-L-methionine = a ubiquinol + S-adenosyl-L-homocysteine + H(+). It catalyses the reaction a 3-(all-trans-polyprenyl)benzene-1,2-diol + S-adenosyl-L-methionine = a 2-methoxy-6-(all-trans-polyprenyl)phenol + S-adenosyl-L-homocysteine + H(+). It functions in the pathway cofactor biosynthesis; ubiquinone biosynthesis. In terms of biological role, O-methyltransferase that catalyzes the 2 O-methylation steps in the ubiquinone biosynthetic pathway. The sequence is that of Ubiquinone biosynthesis O-methyltransferase from Pseudomonas aeruginosa (strain ATCC 15692 / DSM 22644 / CIP 104116 / JCM 14847 / LMG 12228 / 1C / PRS 101 / PAO1).